We begin with the raw amino-acid sequence, 156 residues long: ATP synthase subunit b (156 aa).

The chain crosses the membrane as a helical span at residues 11–31; the sequence is AIAFILFVWFCMKYVWPPLMA.

The protein belongs to the ATPase B chain family. In terms of assembly, F-type ATPases have 2 components, F(1) - the catalytic core - and F(0) - the membrane proton channel. F(1) has five subunits: alpha(3), beta(3), gamma(1), delta(1), epsilon(1). F(0) has three main subunits: a(1), b(2) and c(10-14). The alpha and beta chains form an alternating ring which encloses part of the gamma chain. F(1) is attached to F(0) by a central stalk formed by the gamma and epsilon chains, while a peripheral stalk is formed by the delta and b chains.

Its subcellular location is the cell inner membrane. Its function is as follows. F(1)F(0) ATP synthase produces ATP from ADP in the presence of a proton or sodium gradient. F-type ATPases consist of two structural domains, F(1) containing the extramembraneous catalytic core and F(0) containing the membrane proton channel, linked together by a central stalk and a peripheral stalk. During catalysis, ATP synthesis in the catalytic domain of F(1) is coupled via a rotary mechanism of the central stalk subunits to proton translocation. Functionally, component of the F(0) channel, it forms part of the peripheral stalk, linking F(1) to F(0). In Enterobacter sp. (strain 638), this protein is ATP synthase subunit b.